The following is a 567-amino-acid chain: Geranylgeranyl transferase type-2 subunit alpha (567 aa).

6 PFTA repeats span residues 44–78 (LDES…HLET), 88–122 (LVKA…RLPE), 124–158 (NWAR…QAAV), 159–193 (APAE…QLHP), 207–241 (VLLK…RAEP), and 363–397 (VLQS…ALDP). At Ser98 the chain carries Phosphoserine. LRR repeat units lie at residues 442 to 463 (DVRV…EQLL), 464 to 486 (LVTH…AALR), 487 to 508 (CLEV…ANLP), 509 to 530 (RLQE…QPLV), and 534 to 555 (RLVL…QERL).

This sequence belongs to the protein prenyltransferase subunit alpha family. Heterotrimer composed of RABGGTA, RABGGTB and CHM; within this trimer, RABGGTA and RABGGTB form the catalytic component B, while CHM (component A) mediates peptide substrate binding. The Rab GGTase dimer (RGGT) interacts with CHM (component A) prior to Rab protein binding; the association is stabilized by geranylgeranyl pyrophosphate (GGpp). The CHM:RGGT:Rab complex is destabilized by GGpp. Interacts with non-phosphorylated form of RAB8A; phosphorylation of RAB8A at 'Thr-72' disrupts this interaction. Most abundant in the heart, brain, spleen and liver. Less in the lung, muscle, kidney and testis; in these tissues less abundant than the beta subunit.

It catalyses the reaction geranylgeranyl diphosphate + L-cysteinyl-[protein] = S-geranylgeranyl-L-cysteinyl-[protein] + diphosphate. With respect to regulation, the enzymatic reaction requires the aid of a Rab escort protein (also called component A), such as CHM. In terms of biological role, catalyzes the transfer of a geranylgeranyl moiety from geranylgeranyl diphosphate to both cysteines of Rab proteins with the C-terminal sequence -XXCC, -XCXC and -CCXX, such as RAB1A, RAB3A, RAB5A and RAB7A. The chain is Geranylgeranyl transferase type-2 subunit alpha (Rabggta) from Rattus norvegicus (Rat).